An 830-amino-acid chain; its full sequence is Isethionate sulfite-lyase (830 aa).

The region spanning K31–V700 is the PFL domain. 2-hydroxyethane-1-sulfonate-binding positions include R189, Q193, C468–E470, and R678. C468 (cysteine radical intermediate) is an active-site residue. The active-site Proton acceptor is the E470. The 124-residue stretch at D707 to M830 folds into the Glycine radical domain. G805 carries the glycine radical modification.

The protein belongs to the glycyl radical enzyme (GRE) family. As to quaternary structure, homodimer. Requires the activating protein IslB to generate the key active site glycyl radical on Gly-805 that is involved in catalysis.

The catalysed reaction is 2-hydroxyethane-1-sulfonate = acetaldehyde + sulfite + H(+). The protein operates within organosulfur degradation; alkanesulfonate degradation. Functionally, involved in an anaerobic respiration pathway that converts the sulfonate taurine (2-aminoethanesulfonate) to ammonia, acetate and sulfide. Catalyzes the radical-mediated C-S bond cleavage of isethionate (2-hydroxyethanesulfonate) to form sulfite and acetaldehyde. Is not able to use any alternate organosulfonate or (S)-1,2-propanediol or choline as a substrate, showing that this enzyme is highly specific for isethionate. This is Isethionate sulfite-lyase from Bilophila wadsworthia (strain 3_1_6).